A 368-amino-acid polypeptide reads, in one-letter code: 1-deoxy-D-xylulose 5-phosphate reductoisomerase (368 aa).

NADPH-binding residues include Thr7, Gly8, Ser9, Ile10, Gly31, Lys32, Asn33, and Asn113. A 1-deoxy-D-xylulose 5-phosphate-binding site is contributed by Lys114. Glu115 lines the NADPH pocket. Residue Asp133 coordinates Mn(2+). The 1-deoxy-D-xylulose 5-phosphate site is built by Ser134, Glu135, Ser158, and His181. Glu135 serves as a coordination point for Mn(2+). Gly187 contacts NADPH. The 1-deoxy-D-xylulose 5-phosphate site is built by Ser194, Asn199, Lys200, and Glu203. A Mn(2+)-binding site is contributed by Glu203.

It belongs to the DXR family. Requires Mg(2+) as cofactor. Mn(2+) serves as cofactor.

The enzyme catalyses 2-C-methyl-D-erythritol 4-phosphate + NADP(+) = 1-deoxy-D-xylulose 5-phosphate + NADPH + H(+). The protein operates within isoprenoid biosynthesis; isopentenyl diphosphate biosynthesis via DXP pathway; isopentenyl diphosphate from 1-deoxy-D-xylulose 5-phosphate: step 1/6. In terms of biological role, catalyzes the NADPH-dependent rearrangement and reduction of 1-deoxy-D-xylulose-5-phosphate (DXP) to 2-C-methyl-D-erythritol 4-phosphate (MEP). The chain is 1-deoxy-D-xylulose 5-phosphate reductoisomerase from Helicobacter pylori (strain P12).